The chain runs to 377 residues: 5-hydroxytryptamine receptor 1D (377 aa).

3 N-linked (GlcNAc...) asparagine glycosylation sites follow: N5, N17, and N21. 3 consecutive transmembrane segments (helical) span residues 39–64 (ISLA…TTIL), 76–97 (LIGS…ISIA), and 110–134 (LCDI…VIAL). A disulfide bond links C111 and C188. Serotonin is bound by residues D118 and C122. A DRY motif; important for ligand-induced conformation changes motif is present at residues 135–137 (DRY). Transmembrane regions (helical) follow at residues 155 to 176 (AAAM…PLFW), 195 to 218 (ISYT…VLYG), 301 to 326 (KTLG…VLPI), and 336 to 359 (GLFD…YTVF). S321 contributes to the serotonin binding site. An NPxxY motif; important for ligand-induced conformation changes and signaling motif is present at residues 352 to 356 (NPIIY).

It belongs to the G-protein coupled receptor 1 family. In terms of assembly, homodimer. Heterodimer with HTR1B.

The protein localises to the cell membrane. Its function is as follows. G-protein coupled receptor for 5-hydroxytryptamine (serotonin). Also functions as a receptor for ergot alkaloid derivatives, various anxiolytic and antidepressant drugs and other psychoactive substances. Ligand binding causes a conformation change that triggers signaling via guanine nucleotide-binding proteins (G proteins) and modulates the activity of downstream effectors, such as adenylate cyclase. HTR1D is coupled to G(i)/G(o) G alpha proteins and mediates inhibitory neurotransmission by inhibiting adenylate cyclase activity. Regulates the release of 5-hydroxytryptamine in the brain, and thereby affects neural activity. May also play a role in regulating the release of other neurotransmitters. May play a role in vasoconstriction. This is 5-hydroxytryptamine receptor 1D (HTR1D) from Oryctolagus cuniculus (Rabbit).